A 1011-amino-acid chain; its full sequence is Phosphoenolpyruvate carboxylase (1011 aa).

Catalysis depends on residues histidine 207 and lysine 658.

It belongs to the PEPCase type 1 family. Mg(2+) is required as a cofactor.

The catalysed reaction is oxaloacetate + phosphate = phosphoenolpyruvate + hydrogencarbonate. In terms of biological role, forms oxaloacetate, a four-carbon dicarboxylic acid source for the tricarboxylic acid cycle. The chain is Phosphoenolpyruvate carboxylase (ppc) from Thermosynechococcus vestitus (strain NIES-2133 / IAM M-273 / BP-1).